A 331-amino-acid chain; its full sequence is MSDNKKQQALELALKQIEKQFGKGSIMKLGDGADHSIEAIPSGSIALDIALGIGGYPRGRIIEVYGPESSGKTTLTLHAMASAQKQGGTVAFIDAEHALDPNYAKALGVDLDNLVLSQPDTGEQALDIAEALIKSGSIDMIVIDSVAALVPEAEIAGDMSANHVGLQARMMSQAMRKMSGVISKSNVVAIFINQIREKVGVMFGNPETTPGGRALKFFSSVRLEIRRAEAIKQGSEMIGIKSNVKVVKSKVAPPLKTASIDIMYGTGISRSGEVLDLSVELNLVNKSGAWYNIGEEKLGQGRDNAKQYLEDKPELLNELEKKVRTHFKLTK.

Residue G66 to T73 coordinates ATP.

This sequence belongs to the RecA family.

It localises to the cytoplasm. Functionally, can catalyze the hydrolysis of ATP in the presence of single-stranded DNA, the ATP-dependent uptake of single-stranded DNA by duplex DNA, and the ATP-dependent hybridization of homologous single-stranded DNAs. It interacts with LexA causing its activation and leading to its autocatalytic cleavage. This Acholeplasma laidlawii protein is Protein RecA.